The following is a 259-amino-acid chain: Ribosomal RNA small subunit methyltransferase J (259 aa).

Residues Arg101–Asp102, Glu117–Arg118, Ser153–Ser154, and Asp176 contribute to the S-adenosyl-L-methionine site.

This sequence belongs to the methyltransferase superfamily. RsmJ family.

It is found in the cytoplasm. It catalyses the reaction guanosine(1516) in 16S rRNA + S-adenosyl-L-methionine = N(2)-methylguanosine(1516) in 16S rRNA + S-adenosyl-L-homocysteine + H(+). Its function is as follows. Specifically methylates the guanosine in position 1516 of 16S rRNA. This is Ribosomal RNA small subunit methyltransferase J from Vibrio parahaemolyticus serotype O3:K6 (strain RIMD 2210633).